The following is a 761-amino-acid chain: MRASQVPNACSLLSLAMLFFPVTGTSKQNIPRLKLSYKDLLLSNSCIPFLGSTEGLDFRTLLLDEERGRLLVGAKDHIFLLNLVDLNKNVKKIYWPAAKEKMELCKLAGKDAHTDCANFIRVLQPYNRTHVYVCGTGAFHPLCGYIELGTHKEETIFRLDTQNLESGRLKCPFDPQQPFASVMADEYLYAGTASDFLGKDTALTRSLGPSHDHHYIRTDISEHYWLTGAKFIATFPIPDTYNPDDDKIYFFFREISQDSSTSDKTILSRVGRVCKNDMGGQRSLINKWTTFLKARLVCSIPGPEGADTHFDELQDIFLLSTRDERNPLVYGVFTTTSSVFKGSAVCVYSMADIRAVFNGPYAHKESADHRWVQYEGRIPYPRPGTCPSKTYDPLIKSTRDFPDEVISFIKRHPLMYKSVYPLTGGPVFTRINVDYRLTQIVVDHVMAEDGQYDVIFLGTDIGTVLKAVSITKEKWTKEEVVLEELQIFKHPSFISTMEISQKQQQLYIGSRDGLVQLSLHRCHTYGKACADCCLARDPYCAWDGNSCSRYAPTSKRRARRQDVKYGDPVAQCWDVEDSISHETADEKVIFGIEFNSTFLECIPKSQQASIRWYIQRSGEEHREELKADERIIKTEHGLLIRSLQRRDAGAYFCKAQEHTFIHTIVKLNLNVIENGQMESTQKTEDEEGRVRDLLTESRLRYKDYIQLVSSPSFSLDEYCEQMWHREKRRQRNKGGAKWKHVQEMKKKRNRRHHEPARPPST.

An N-terminal signal peptide occupies residues 1–24 (MRASQVPNACSLLSLAMLFFPVTG). The region spanning 32 to 519 (RLKLSYKDLL…SRDGLVQLSL (488 aa)) is the Sema domain. The cysteines at positions 105 and 116 are disulfide-linked. Asn-127 carries N-linked (GlcNAc...) asparagine glycosylation. 4 disulfides stabilise this stretch: Cys-134–Cys-143, Cys-274–Cys-386, Cys-298–Cys-346, and Cys-522–Cys-540. The 119-residue stretch at 552-670 (PTSKRRARRQ…IHTIVKLNLN (119 aa)) folds into the Ig-like C2-type domain. The N-linked (GlcNAc...) asparagine glycan is linked to Asn-595. Cys-653 and Cys-719 form a disulfide bridge. Residues 728-754 (RRQRNKGGAKWKHVQEMKKKRNRRHHE) are compositionally biased toward basic residues. The disordered stretch occupies residues 728–761 (RRQRNKGGAKWKHVQEMKKKRNRRHHEPARPPST).

This sequence belongs to the semaphorin family. Developing spinal cord and developing visual system. Collapsin-1, -2, -3, and -5 bind to overlapping but distinct axon tracts.

It is found in the secreted. Functionally, induces the collapse and paralysis of neuronal growth cones. Could potentially act as repulsive cues toward specific neuronal populations. Binds to neuropilin. This chain is Semaphorin-3D (SEMA3D), found in Gallus gallus (Chicken).